The chain runs to 653 residues: Chaperone protein HtpG (653 aa).

The segment at methionine 1–arginine 361 is a; substrate-binding. The b stretch occupies residues glutamate 362–lysine 578. The tract at residues leucine 579–lysine 653 is c.

The protein belongs to the heat shock protein 90 family. In terms of assembly, homodimer.

It localises to the cytoplasm. Its function is as follows. Molecular chaperone. Has ATPase activity. The sequence is that of Chaperone protein HtpG from Colwellia psychrerythraea (strain 34H / ATCC BAA-681) (Vibrio psychroerythus).